A 307-amino-acid polypeptide reads, in one-letter code: Coproporphyrin III ferrochelatase (307 aa).

Residues tyrosine 12, arginine 29, 45–46 (RY), serine 53, and tyrosine 124 each bind Fe-coproporphyrin III. 2 residues coordinate Fe(2+): histidine 181 and glutamate 263.

Belongs to the ferrochelatase family.

The protein localises to the cytoplasm. It carries out the reaction Fe-coproporphyrin III + 2 H(+) = coproporphyrin III + Fe(2+). The protein operates within porphyrin-containing compound metabolism; protoheme biosynthesis. In terms of biological role, involved in coproporphyrin-dependent heme b biosynthesis. Catalyzes the insertion of ferrous iron into coproporphyrin III to form Fe-coproporphyrin III. The chain is Coproporphyrin III ferrochelatase from Staphylococcus aureus (strain COL).